Reading from the N-terminus, the 181-residue chain is ADP-ribosylation factor 1 (181 aa).

Gly2 carries N-myristoyl glycine lipidation. Residues 3–16 (LYVSRLFNRLFQKK) form an important for the stable binding to the membranes region. GTP-binding positions include 27–32 (AAGKTT), 126–129 (NKQD), and Ala160.

This sequence belongs to the small GTPase superfamily. Arf family. May interact with GTPase RAB5b.

Its subcellular location is the golgi apparatus membrane. The catalysed reaction is GTP + H2O = GDP + phosphate + H(+). Its activity is regulated as follows. Alternates between an inactive GDP-bound form and an active GTP-bound form. Intrinsic GTPase activity is almost undetectable in vitro. Activated by a guanine nucleotide-exchange factor (GEF) and inactivated by GTPase-activating protein ARFGAP1. Its function is as follows. Small GTPase involved in protein trafficking between different compartments. Modulates vesicle budding and uncoating within the Golgi complex. In its GTP-bound form, triggers the recruitment of coatomer proteins to the Golgi membrane. The hydrolysis of ARF1-bound GTP, which is mediated by ARFGAPs proteins, is required for dissociation of coat proteins from Golgi membranes and vesicles. Regulates the transport of N-acylated AK2 to the parasitophorous vacuole membrane. May be involved in the activation of lipid kinase PIP5K. The protein is ADP-ribosylation factor 1 of Plasmodium falciparum (isolate 3D7).